The following is a 505-amino-acid chain: GDP-Man:Man(3)GlcNAc(2)-PP-Dol alpha-1,2-mannosyltransferase (505 aa).

The Lumenal portion of the chain corresponds to 1–3 (MDE). A helical membrane pass occupies residues 4–24 (LIMMVFVLFTIVLLLTVSMTL). Residues 25–145 (AALISTIVVL…KWVEASTYPR (121 aa)) lie on the Cytoplasmic side of the membrane. Residues 146 to 166 (FTLIGQSLGSMILGWEALTKF) constitute an intramembrane region (helical). Residues 167–402 (VPTIFLDSMG…VGIHTMYNEH (236 aa)) lie on the Cytoplasmic side of the membrane. Residues 403-423 (FGIGVVELMAAGVIPVANNSA) constitute an intramembrane region (helical). Over 424–505 (GPKEDIVRHE…NNNSSSKKRN (82 aa)) the chain is Cytoplasmic.

This sequence belongs to the glycosyltransferase group 1 family.

Its subcellular location is the endoplasmic reticulum membrane. The catalysed reaction is an alpha-D-Man-(1-&gt;3)-[alpha-D-Man-(1-&gt;6)]-beta-D-Man-(1-&gt;4)-beta-D-GlcNAc-(1-&gt;4)-alpha-D-GlcNAc-diphospho-di-trans,poly-cis-dolichol + 2 GDP-alpha-D-mannose = an alpha-D-Man-(1-&gt;2)-alpha-D-Man-(1-&gt;2)-alpha-D-Man-(1-&gt;3)-[alpha-D-Man-(1-&gt;6)]-beta-D-Man-(1-&gt;4)-beta-D-GlcNAc-(1-&gt;4)-alpha-D-GlcNAc-diphospho-di-trans,poly-cis-dolichol + 2 GDP + 2 H(+). Its pathway is protein modification; protein glycosylation. In terms of biological role, GDP-Man:Man(3)GlcNAc(2)-PP-Dol alpha-1,2-mannosyltransferase that operates in the biosynthetic pathway of dolichol-linked oligosaccharides, the glycan precursors employed in protein asparagine (N)-glycosylation. The assembly of dolichol-linked oligosaccharides begins on the cytosolic side of the endoplasmic reticulum membrane and finishes in its lumen. The sequential addition of sugars to dolichol pyrophosphate produces dolichol-linked oligosaccharides containing fourteen sugars, including two GlcNAcs, nine mannoses and three glucoses. Once assembled, the oligosaccharide is transferred from the lipid to nascent proteins by oligosaccharyltransferases. Catalyzes, on the cytoplasmic face of the endoplasmic reticulum, the addition of the fourth and fifth mannose residues to the dolichol-linked oligosaccharide chain, to produce Man(5)GlcNAc(2)-PP-dolichol core oligosaccharide. The chain is GDP-Man:Man(3)GlcNAc(2)-PP-Dol alpha-1,2-mannosyltransferase (alg11) from Dictyostelium discoideum (Social amoeba).